The chain runs to 465 residues: MPQTPTRLVSPYGSDRLVQLAARLRPALCDTLITVGGLEFPAHSLVLAGASPRLGCRGRWALVEDISPSTFAQILTFVYGESIELQPGELGDLEEAAKALGVQALEEACQRAQKGKDEDELDPGLKRHQQSEDFMRGSERGLGSPGEKQKPEKDFRSNGREQEMSHKHKAPGERPEMAGATRMMSSEEVMRGIESHKGSEESLRGCPDPLSPPGSLLTSLIPRPWWAEVPRLGEGQSALWSILLWPSRYGAPFSHSTPITAAWQVRPQDQRIPLTLNHSKALWSQNQLASSSPTPGSFPQGTESLSPWQIETSGQGFTGTLATCVSQERTLNCPSHQHPPLPSPARSRPYSCSVCGKRFSLKHQMETHYRVHTGEKPFSCSLCPQRSRDFSAMTKHLRTHGAAPYRCPLCRAGCPSLASMQAHMRGHSPSRLPPGWTIRSTFLYSSSRPTRASSSPGSPTSSAAT.

The BTB domain maps to 29–87 (CDTLITVGGLEFPAHSLVLAGASPRLGCRGRWALVEDISPSTFAQILTFVYGESIELQP). Disordered regions lie at residues 111 to 179 (RAQK…EMAG) and 285 to 310 (QNQL…PWQI). 2 stretches are compositionally biased toward basic and acidic residues: residues 123 to 139 (PGLK…RGSE) and 147 to 176 (EKQK…ERPE). 3 consecutive C2H2-type zinc fingers follow at residues 350–372 (YSCS…YRVH), 378–400 (FSCS…LRTH), and 405–427 (YRCP…MRGH).

This sequence belongs to the krueppel C2H2-type zinc-finger protein family. In terms of assembly, homodimer (via PTB domain). Interacts with the N-terminal of FANCC. Interacts with ZBTB16. Interacts with GATA3. In terms of tissue distribution, isoform 1 is testis-specific and is not expressed in lymphoid organs such as thymus or spleen. Isoform 2 is expressed in both B- and T-lymphoid cells.

The protein resides in the nucleus. Its function is as follows. DNA-binding protein that binds to the to a 5'-TGTACAGTGT-3' core sequence. May function as a transcriptional transactivator and transcriptional repressor. Probably exerts its repressor effect by preventing GATA3 from binding to DNA. May play a role in regulating the differentiation and activation of helper T-cells. This chain is Zinc finger and BTB domain-containing protein 32 (Zbtb32), found in Mus musculus (Mouse).